Consider the following 174-residue polypeptide: UPF0340 protein SE_1711 (174 aa).

It belongs to the UPF0340 family.

In Staphylococcus epidermidis (strain ATCC 12228 / FDA PCI 1200), this protein is UPF0340 protein SE_1711.